We begin with the raw amino-acid sequence, 107 residues long: MVNFNQFLKQAQSMQKKMQEAQEQMANTRYTGKAGGMLVEIIITGKGEVEKISIDESLLKTEEKEMLEDLIKVAFNDAKQKCDEDSQNSLSGALNGMSLPPGFKIPF.

The protein belongs to the YbaB/EbfC family. As to quaternary structure, homodimer.

Its subcellular location is the cytoplasm. The protein localises to the nucleoid. Its function is as follows. Binds to DNA and alters its conformation. May be involved in regulation of gene expression, nucleoid organization and DNA protection. The sequence is that of Nucleoid-associated protein RP866 from Rickettsia prowazekii (strain Madrid E).